The primary structure comprises 142 residues: Galactose-6-phosphate isomerase subunit LacA (142 aa).

It belongs to the LacAB/RpiB family. Heteromultimeric protein consisting of LacA and LacB.

It carries out the reaction aldehydo-D-galactose 6-phosphate = keto-D-tagatose 6-phosphate. It participates in carbohydrate metabolism; D-galactose 6-phosphate degradation; D-tagatose 6-phosphate from D-galactose 6-phosphate: step 1/1. The sequence is that of Galactose-6-phosphate isomerase subunit LacA from Staphylococcus haemolyticus (strain JCSC1435).